The sequence spans 266 residues: MPLTPADVHNVAFSKPPIGKRGYNEDEVDAFLDLVENELTQLIEENSDLRQRIEELDHELAAGGGTGAGPVIAVQPTQALSTFEPELVSAKQAPVAAVAETAEELAMKATRVLSLAQDTADQLTSTAKVESDKMLADARVNADQILGEARLTAEATVAEAQQRADAMLADAQTRSEVQSRQAQEKADALQAEAERKHSEIMGAISQQRTVLEGRLEQLRTFEREYRTRLKTYLESQLEELGQRGSAAPVDSNADAGGFDQFNRGNN.

Residues 31-64 (FLDLVENELTQLIEENSDLRQRIEELDHELAAGG) are a coiled coil. Residue T77 is modified to Phosphothreonine. Residues 152–203 (TAEATVAEAQQRADAMLADAQTRSEVQSRQAQEKADALQAEAERKHSEIMGA) are a coiled coil. The tract at residues 239–266 (ELGQRGSAAPVDSNADAGGFDQFNRGNN) is disordered.

This sequence belongs to the DivIVA family. Forms homooligomers. Phosphorylated by PknA.

The protein resides in the cytoplasm. Its function is as follows. Important for maintaining cell shape and cell wall integrity by localizing peptidoglycan synthesis to the cell poles. The polypeptide is Cell wall synthesis protein Wag31 (wag31) (Mycobacterium leprae (strain TN)).